The following is a 797-amino-acid chain: Calcium-transporting ATPase CtpE (797 aa).

Transmembrane regions (helical) follow at residues 55–75, 215–235, and 254–274; these read LLLI…LLII, ILQF…YTQL, and VPMV…VGVV. Asp-301 acts as the 4-aspartylphosphate intermediate in catalysis. Mg(2+) is bound by residues Asp-301, Thr-303, and Asp-536. 6 helical membrane-spanning segments follow: residues 601–621, 633–653, 667–687, 703–723, 729–749, and 764–784; these read TVYS…AIPL, IHVT…LSLA, VMTS…VTYL, ASTA…AVIA, WRLA…SLPL, and TSIA…MWWI.

Belongs to the cation transport ATPase (P-type) (TC 3.A.3) family.

Its subcellular location is the cell membrane. It carries out the reaction Ca(2+)(in) + ATP + H2O = Ca(2+)(out) + ADP + phosphate + H(+). In terms of biological role, P-type ATPase involved in specific uptake of calcium. This chain is Calcium-transporting ATPase CtpE (ctpE), found in Mycobacterium tuberculosis (strain CDC 1551 / Oshkosh).